Here is a 132-residue protein sequence, read N- to C-terminus: Phosphoribosyl-ATP pyrophosphatase (132 aa).

This sequence belongs to the PRA-PH family.

It is found in the cytoplasm. It catalyses the reaction 1-(5-phospho-beta-D-ribosyl)-ATP + H2O = 1-(5-phospho-beta-D-ribosyl)-5'-AMP + diphosphate + H(+). It participates in amino-acid biosynthesis; L-histidine biosynthesis; L-histidine from 5-phospho-alpha-D-ribose 1-diphosphate: step 2/9. The sequence is that of Phosphoribosyl-ATP pyrophosphatase from Acidovorax sp. (strain JS42).